We begin with the raw amino-acid sequence, 424 residues long: Glutamyl-tRNA reductase (424 aa).

Substrate contacts are provided by residues 53 to 56 (TCNR), serine 111, 116 to 118 (EPQ), and glutamine 122. Cysteine 54 (nucleophile) is an active-site residue. 191 to 196 (GAGEMI) is a binding site for NADP(+).

Belongs to the glutamyl-tRNA reductase family. As to quaternary structure, homodimer.

It catalyses the reaction (S)-4-amino-5-oxopentanoate + tRNA(Glu) + NADP(+) = L-glutamyl-tRNA(Glu) + NADPH + H(+). The protein operates within porphyrin-containing compound metabolism; protoporphyrin-IX biosynthesis; 5-aminolevulinate from L-glutamyl-tRNA(Glu): step 1/2. Functionally, catalyzes the NADPH-dependent reduction of glutamyl-tRNA(Glu) to glutamate 1-semialdehyde (GSA). This Bordetella bronchiseptica (strain ATCC BAA-588 / NCTC 13252 / RB50) (Alcaligenes bronchisepticus) protein is Glutamyl-tRNA reductase.